The primary structure comprises 238 residues: Ion-translocating oxidoreductase complex subunit E (238 aa).

The next 6 membrane-spanning stretches (helical) occupy residues 24 to 44, 52 to 72, 84 to 104, 106 to 126, 141 to 161, and 195 to 215; these read ALWQ…TLAV, LGMG…ISSM, VMIG…NAWM, ELYK…AVLG, ILDG…IGGI, and GILL…LLAA.

This sequence belongs to the NqrDE/RnfAE family. The complex is composed of six subunits: RnfA, RnfB, RnfC, RnfD, RnfE and RnfG.

The protein resides in the cell inner membrane. Part of a membrane-bound complex that couples electron transfer with translocation of ions across the membrane. This Azotobacter vinelandii (strain DJ / ATCC BAA-1303) protein is Ion-translocating oxidoreductase complex subunit E.